Reading from the N-terminus, the 119-residue chain is Acidic phospholipase A2 natratoxin (119 aa).

Intrachain disulfides connect Cys11–Cys71, Cys26–Cys118, Cys28–Cys44, Cys43–Cys99, Cys50–Cys92, Cys60–Cys85, and Cys78–Cys90. Ca(2+) is bound by residues Tyr27, Gly29, and Gly31. Residue His47 is part of the active site. Asp48 contributes to the Ca(2+) binding site. Residue Asp93 is part of the active site.

It belongs to the phospholipase A2 family. Group I subfamily. D49 sub-subfamily. Requires Ca(2+) as cofactor. Expressed by the venom gland.

The protein resides in the secreted. It catalyses the reaction a 1,2-diacyl-sn-glycero-3-phosphocholine + H2O = a 1-acyl-sn-glycero-3-phosphocholine + a fatty acid + H(+). Functionally, snake venom phospholipase A2 (PLA2) that has an effectively inhibitory effect on A-type K(+) currents (Kv/KCN) in acutely dissociated rat dorsal root ganglion (DRG) neurons. This inhibitory effect is independent of its enzymatic activity. PLA2 catalyzes the calcium-dependent hydrolysis of the 2-acyl groups in 3-sn-phosphoglycerides. This chain is Acidic phospholipase A2 natratoxin, found in Naja atra (Chinese cobra).